The chain runs to 280 residues: Phosphatidylserine decarboxylase proenzyme (280 aa).

Active-site charge relay system; for autoendoproteolytic cleavage activity residues include D88, H144, and S247. S247 functions as the Schiff-base intermediate with substrate; via pyruvic acid; for decarboxylase activity in the catalytic mechanism. S247 carries the post-translational modification Pyruvic acid (Ser); by autocatalysis.

Belongs to the phosphatidylserine decarboxylase family. PSD-B subfamily. Prokaryotic type I sub-subfamily. Heterodimer of a large membrane-associated beta subunit and a small pyruvoyl-containing alpha subunit. Requires pyruvate as cofactor. In terms of processing, is synthesized initially as an inactive proenzyme. Formation of the active enzyme involves a self-maturation process in which the active site pyruvoyl group is generated from an internal serine residue via an autocatalytic post-translational modification. Two non-identical subunits are generated from the proenzyme in this reaction, and the pyruvate is formed at the N-terminus of the alpha chain, which is derived from the carboxyl end of the proenzyme. The autoendoproteolytic cleavage occurs by a canonical serine protease mechanism, in which the side chain hydroxyl group of the serine supplies its oxygen atom to form the C-terminus of the beta chain, while the remainder of the serine residue undergoes an oxidative deamination to produce ammonia and the pyruvoyl prosthetic group on the alpha chain. During this reaction, the Ser that is part of the protease active site of the proenzyme becomes the pyruvoyl prosthetic group, which constitutes an essential element of the active site of the mature decarboxylase.

It is found in the cell membrane. It carries out the reaction a 1,2-diacyl-sn-glycero-3-phospho-L-serine + H(+) = a 1,2-diacyl-sn-glycero-3-phosphoethanolamine + CO2. It functions in the pathway phospholipid metabolism; phosphatidylethanolamine biosynthesis; phosphatidylethanolamine from CDP-diacylglycerol: step 2/2. Its function is as follows. Catalyzes the formation of phosphatidylethanolamine (PtdEtn) from phosphatidylserine (PtdSer). This Xanthomonas euvesicatoria pv. vesicatoria (strain 85-10) (Xanthomonas campestris pv. vesicatoria) protein is Phosphatidylserine decarboxylase proenzyme.